We begin with the raw amino-acid sequence, 216 residues long: Probable GTP-binding protein EngB (216 aa).

The EngB-type G domain occupies 23-197 (EGAEIAFAGR…EHKVAGWLGL (175 aa)). Residues 31–38 (GRSNAGKS), 58–62 (GRTQL), 76–79 (DLPG), 143–146 (TKCD), and 176–178 (FSS) contribute to the GTP site. The Mg(2+) site is built by Ser-38 and Thr-60.

This sequence belongs to the TRAFAC class TrmE-Era-EngA-EngB-Septin-like GTPase superfamily. EngB GTPase family. The cofactor is Mg(2+).

In terms of biological role, necessary for normal cell division and for the maintenance of normal septation. The chain is Probable GTP-binding protein EngB from Aromatoleum aromaticum (strain DSM 19018 / LMG 30748 / EbN1) (Azoarcus sp. (strain EbN1)).